The primary structure comprises 261 residues: HLA class II histocompatibility antigen, DM alpha chain (261 aa).

A signal peptide spans 1-26 (MGHEQNQGAALLQMLPLLWLLPHSWA). The interval 27–124 (VPEAPTPMWP…KLDGKIPVSR (98 aa)) is alpha-1. Residues 27–233 (VPEAPTPMWP…PSDLLENVLC (207 aa)) are Lumenal-facing. Residue asparagine 41 is glycosylated (N-linked (GlcNAc...) asparagine). 2 disulfide bridges follow: cysteine 50–cysteine 105 and cysteine 147–cysteine 202. Residues 121 to 215 (PVSRGFPIAE…HEIDRYTAIA (95 aa)) form the Ig-like C1-type domain. The segment at 125-217 (GFPIAEVFTL…IDRYTAIAYW (93 aa)) is alpha-2. Positions 218–233 (VPRNALPSDLLENVLC) are connecting peptide. Residues 234-254 (GVAFGLGVLGIIVGIVLIIYF) form a helical membrane-spanning segment. The Cytoplasmic portion of the chain corresponds to 255–261 (RKPCSGD).

This sequence belongs to the MHC class II family. In terms of assembly, heterodimer of an alpha chain (DMA) and a beta chain (DMB). Interacts with MHCII; this interaction mediates rapid selection of high-affinity peptides in a pH-dependent manner, with an optimum at pH 5.5.

The protein resides in the late endosome membrane. The protein localises to the lysosome membrane. Functionally, plays a critical role in catalyzing the release of class II-associated invariant chain peptide (CLIP) from newly synthesized MHC class II molecules and freeing the peptide binding site for acquisition of antigenic peptides. In B-cells, the interaction between HLA-DM and MHC class II molecules is regulated by HLA-DO. This chain is HLA class II histocompatibility antigen, DM alpha chain (HLA-DMA), found in Homo sapiens (Human).